The primary structure comprises 575 residues: Chaperonin CPN60-1, mitochondrial (575 aa).

A mitochondrion-targeting transit peptide spans 1–32; it reads MHRFATGLASKARLARNGANQIASRSNWRRNY.

It belongs to the chaperonin (HSP60) family.

It is found in the mitochondrion. Its function is as follows. Implicated in mitochondrial protein import and macromolecular assembly. May facilitate the correct folding of imported proteins. May also prevent misfolding and promote the refolding and proper assembly of unfolded polypeptides generated under stress conditions in the mitochondrial matrix. The protein is Chaperonin CPN60-1, mitochondrial (CPN60-1) of Cucurbita maxima (Pumpkin).